Consider the following 1065-residue polypeptide: Alpha-L-arabinofuranosidase (1065 aa).

Residues 1 to 26 (MKHWKKMAASLIAISTMVAVVPTTYA) form the signal peptide. One can recognise a BIG2 domain in the interval 277 to 346 (VVNNKLTLIE…TTELGGVKAE (70 aa)). Residues 997–1031 (KAPTNPGEGDGDKGDGNKPTTPTTGDKTNVNKPGS) are disordered. Over residues 1014–1031 (KPTTPTTGDKTNVNKPGS) the composition is skewed to polar residues. Residues 1040-1060 (VLGLGGAVVALAIAGISLTLW) traverse the membrane as a helical segment.

This sequence belongs to the glycosyl hydrolase 43 family.

The protein resides in the cell membrane. The catalysed reaction is Hydrolysis of terminal non-reducing alpha-L-arabinofuranoside residues in alpha-L-arabinosides.. Functionally, involved in the type II arabinogalactan (AG) side chains degradation. Releases arabinofuranose (Araf) from alpha-1,3-Araf-substituted beta-1,6-galactooligosaccharides. Can use radish root AGP, larch AG and arabinan. Shows weaker activity with gum arabic and arabinoxylan. The chain is Alpha-L-arabinofuranosidase from Bifidobacterium longum subsp. longum (strain ATCC 15707 / DSM 20219 / JCM 1217 / NCTC 11818 / E194b).